A 673-amino-acid chain; its full sequence is NACHT, LRR and PYD domains-containing protein 10 (673 aa).

The region spanning 1–92 (MALARANSPQ…VDYLNQVCLN (92 aa)) is the Pyrin domain. An NACHT domain is found at 163-469 (PIVVMQGSAG…AMSFLVKEDQ (307 aa)). 169 to 176 (GSAGTGKT) is a binding site for ATP. The interval 578-673 (SDKKKSVSVT…DGEMIDKMNG (96 aa)) is disordered. Positions 584-597 (VSVTSSFSSGKVQS) are enriched in low complexity. The span at 633–648 (ASREKGHMEMNDKEDG) shows a compositional bias: basic and acidic residues. The span at 649 to 658 (GVEEQEDEEG) shows a compositional bias: acidic residues. Positions 659 to 673 (QTLKKDGEMIDKMNG) are enriched in basic and acidic residues.

It belongs to the NLRP family. In terms of assembly, oligomerizes. Interacts with PYCARD. Also interacts with CASP1 and IL1B. Interacts with NOD1 and components of the NOD1 signaling pathway including RIPK2, NR2C2/TAK1 and IKBKG/NEMO. In terms of tissue distribution, expressed in skin, tongue, heart, colon and several cell lines of hematopoietic and myocytic origin but not in kidney, skeletal muscle, spleen, liver, lung, thymus, brain or small intestine (at protein level).

The protein resides in the cytoplasm. The protein localises to the cell membrane. Its function is as follows. Inhibits autoprocessing of CASP1, CASP1-dependent IL1B secretion, PYCARD aggregation and PYCARD-mediated apoptosis but not apoptosis induced by FAS or BID. Displays anti-inflammatory activity. Required for immunity against C.albicans infection. Involved in the innate immune response by contributing to pro-inflammatory cytokine release in response to invasive bacterial infection. Contributes to T-cell-mediated inflammatory responses in the skin. Plays a role in protection against periodontitis through its involvement in induction of IL1A via ERK activation in oral epithelial cells infected with periodontal pathogens. Exhibits both ATPase and GTPase activities. This is NACHT, LRR and PYD domains-containing protein 10 (Nlrp10) from Mus musculus (Mouse).